Consider the following 161-residue polypeptide: 18.5 kDa class I heat shock protein (161 aa).

Residues Glu-47–Gly-161 form the sHSP domain.

It belongs to the small heat shock protein (HSP20) family. As to quaternary structure, forms oligomeric structures.

It is found in the cytoplasm. The polypeptide is 18.5 kDa class I heat shock protein (HSP18.5-C) (Glycine max (Soybean)).